We begin with the raw amino-acid sequence, 156 residues long: 6,7-dimethyl-8-ribityllumazine synthase (156 aa).

Residues F23, 57–59 (AYE), and 81–83 (AII) contribute to the 5-amino-6-(D-ribitylamino)uracil site. 86–87 (GT) lines the (2S)-2-hydroxy-3-oxobutyl phosphate pocket. The Proton donor role is filled by H89. F114 provides a ligand contact to 5-amino-6-(D-ribitylamino)uracil. R128 provides a ligand contact to (2S)-2-hydroxy-3-oxobutyl phosphate.

Belongs to the DMRL synthase family.

It catalyses the reaction (2S)-2-hydroxy-3-oxobutyl phosphate + 5-amino-6-(D-ribitylamino)uracil = 6,7-dimethyl-8-(1-D-ribityl)lumazine + phosphate + 2 H2O + H(+). Its pathway is cofactor biosynthesis; riboflavin biosynthesis; riboflavin from 2-hydroxy-3-oxobutyl phosphate and 5-amino-6-(D-ribitylamino)uracil: step 1/2. In terms of biological role, catalyzes the formation of 6,7-dimethyl-8-ribityllumazine by condensation of 5-amino-6-(D-ribitylamino)uracil with 3,4-dihydroxy-2-butanone 4-phosphate. This is the penultimate step in the biosynthesis of riboflavin. This chain is 6,7-dimethyl-8-ribityllumazine synthase, found in Helicobacter pylori (strain Shi470).